The primary structure comprises 343 residues: Aldehyde reductase 2 (343 aa).

Position 177 (Tyr177) interacts with NADP(+).

This sequence belongs to the NAD(P)-dependent epimerase/dehydratase family. Dihydroflavonol-4-reductase subfamily. In terms of assembly, monomer.

The catalysed reaction is a primary alcohol + NADP(+) = an aldehyde + NADPH + H(+). Its activity is regulated as follows. Inhibited by quercetin and diphenylhydantoin. Its function is as follows. Catalyzes the asymmetric reduction of o-substituted aliphatic and aromatic aldehydes and ketones to an S-enantiomer. Reduces ethyl 4-chloro-3-oxobutanoate to ethyl (S)-4-chloro-3-hydroxybutanoate. The sequence is that of Aldehyde reductase 2 from Sporidiobolus salmonicolor (Yeast-like fungus).